The primary structure comprises 201 residues: Pyridoxine/pyridoxamine 5'-phosphate oxidase (201 aa).

Residues 49–54 (RMVLLK), 64–65 (YT), Lys71, and Gln93 contribute to the FMN site. A substrate-binding site is contributed by Lys54. 3 residues coordinate substrate: Tyr111, Arg115, and Ser119. Residues 128–129 (QS) and Trp172 contribute to the FMN site. A substrate-binding site is contributed by 178–180 (RLH). Arg182 contributes to the FMN binding site.

It belongs to the pyridoxamine 5'-phosphate oxidase family. In terms of assembly, homodimer. It depends on FMN as a cofactor.

It carries out the reaction pyridoxamine 5'-phosphate + O2 + H2O = pyridoxal 5'-phosphate + H2O2 + NH4(+). It catalyses the reaction pyridoxine 5'-phosphate + O2 = pyridoxal 5'-phosphate + H2O2. The protein operates within cofactor metabolism; pyridoxal 5'-phosphate salvage; pyridoxal 5'-phosphate from pyridoxamine 5'-phosphate: step 1/1. It functions in the pathway cofactor metabolism; pyridoxal 5'-phosphate salvage; pyridoxal 5'-phosphate from pyridoxine 5'-phosphate: step 1/1. Its function is as follows. Catalyzes the oxidation of either pyridoxine 5'-phosphate (PNP) or pyridoxamine 5'-phosphate (PMP) into pyridoxal 5'-phosphate (PLP). This chain is Pyridoxine/pyridoxamine 5'-phosphate oxidase, found in Ruegeria sp. (strain TM1040) (Silicibacter sp.).